We begin with the raw amino-acid sequence, 100 residues long: Large ribosomal subunit protein bL27 (100 aa).

A propeptide spanning residues Met1–Phe13 is cleaved from the precursor. The interval Lys17–Asp39 is disordered.

This sequence belongs to the bacterial ribosomal protein bL27 family. In terms of processing, the N-terminus is cleaved by ribosomal processing cysteine protease Prp.

The polypeptide is Large ribosomal subunit protein bL27 (Ureaplasma parvum serovar 3 (strain ATCC 700970)).